The sequence spans 114 residues: Nucleoid-associated protein Tlet_0999 (114 aa).

This sequence belongs to the YbaB/EbfC family. Homodimer.

The protein resides in the cytoplasm. It is found in the nucleoid. Binds to DNA and alters its conformation. May be involved in regulation of gene expression, nucleoid organization and DNA protection. The sequence is that of Nucleoid-associated protein Tlet_0999 from Pseudothermotoga lettingae (strain ATCC BAA-301 / DSM 14385 / NBRC 107922 / TMO) (Thermotoga lettingae).